The sequence spans 105 residues: MAEWSGEYISPYAEHGKKSEQVKKITVSIPLKVLKILTDERTRRQVNNLRHATNSELLCEAFLHAFTGQPLPDDADLRKERSDEIPEAAKEIMREMGINPETWEY.

It belongs to the MetJ family. As to quaternary structure, homodimer.

The protein localises to the cytoplasm. In terms of biological role, this regulatory protein, when combined with SAM (S-adenosylmethionine) represses the expression of the methionine regulon and of enzymes involved in SAM synthesis. In Shigella boydii serotype 18 (strain CDC 3083-94 / BS512), this protein is Met repressor.